We begin with the raw amino-acid sequence, 314 residues long: Olfactory receptor 5D13 (314 aa).

The Extracellular portion of the chain corresponds to 1-27 (MMASERNQSSTPTFILLGFSEYPEIQV). Asn7 is a glycosylation site (N-linked (GlcNAc...) asparagine). The chain crosses the membrane as a helical span at residues 28-48 (PLFLVFLFVYTVTVVGNLGMI). Topologically, residues 49–56 (IIIRLNSK) are cytoplasmic. The helical transmembrane segment at 57-77 (LHTIMCFFLSHLSLTDFCFST) threads the bilayer. The Extracellular portion of the chain corresponds to 78-101 (VVTPKLLENLVVEYRTISFSGCIM). A helical transmembrane segment spans residues 102-122 (QFCFACIFGVTETFMLAAMAY). The Cytoplasmic portion of the chain corresponds to 123–141 (DRFVAVCKPLLYTTIMSQK). The chain crosses the membrane as a helical span at residues 142–162 (LCALLVAGSYTWGIVCSLILT). Residues 163–198 (YFLLDLSFCESTFINNFICDHSVIVSASYSDPYISQ) lie on the Extracellular side of the membrane. A helical transmembrane segment spans residues 199-219 (RLCFIIAIFNEVSSLIIILTS). Residues 220–239 (YMLIFTTIMKMRSASGRQKT) lie on the Cytoplasmic side of the membrane. Residues 240-260 (FSTCASHLTAITIFHGTILFL) traverse the membrane as a helical segment. At 261 to 273 (YCVPNPKTSSLIV) the chain is on the extracellular side. A helical transmembrane segment spans residues 274–294 (TVASVFYTVAIPMLNPLIYSL). Over 295-314 (RNKDINNMFEKLVVTKLIYH) the chain is Cytoplasmic.

It belongs to the G-protein coupled receptor 1 family.

Its subcellular location is the cell membrane. Functionally, odorant receptor. In Homo sapiens (Human), this protein is Olfactory receptor 5D13 (OR5D13).